The following is a 352-amino-acid chain: Neuronal growth regulator 1 (352 aa).

The first 35 residues, 1–35 (MVPLVRGAGGSHQWLAAVLLGLCCLLPAGRLAAPG), serve as a signal peptide directing secretion. Ig-like C2-type domains are found at residues 36 to 132 (GDFP…VHLT), 137 to 219 (PKIF…KVTV), and 223 to 311 (PTIQ…LPLN). Cysteines 58 and 116 form a disulfide. N-linked (GlcNAc...) asparagine glycans are attached at residues Asn71 and Asn153. Disulfide bonds link Cys158-Cys201 and Cys243-Cys295. N-linked (GlcNAc...) asparagine glycans are attached at residues Asn273, Asn284, Asn292, and Asn305. Gly322 carries the GPI-anchor amidated glycine lipid modification. The propeptide at 323-352 (DAEVLFSCWYLVLTLSSLTSIFYLKNIILH) is removed in mature form.

This sequence belongs to the immunoglobulin superfamily. IgLON family. As to quaternary structure, interacts with CEPU-1 and LAMP. Post-translationally, glycosylated. In terms of tissue distribution, expressed in embryonic retina, telencephalon, tectum, cerebellum and diencephalon (at protein level).

The protein localises to the cell membrane. May be involved in cell-adhesion. May participate in the regulation of neurite outgrowth in the developing brain. The protein is Neuronal growth regulator 1 (NEGR1) of Gallus gallus (Chicken).